Consider the following 467-residue polypeptide: Glutamate--tRNA ligase 1 (467 aa).

The 'HIGH' region motif lies at 8–18; sequence PSPTGHLHVGG. The 'KMSKS' region motif lies at 230–234; sequence PLSKR. K233 lines the ATP pocket.

It belongs to the class-I aminoacyl-tRNA synthetase family. Glutamate--tRNA ligase type 1 subfamily. In terms of assembly, monomer.

It is found in the cytoplasm. The catalysed reaction is tRNA(Glu) + L-glutamate + ATP = L-glutamyl-tRNA(Glu) + AMP + diphosphate. In terms of biological role, catalyzes the attachment of glutamate to tRNA(Glu) in a two-step reaction: glutamate is first activated by ATP to form Glu-AMP and then transferred to the acceptor end of tRNA(Glu). This is Glutamate--tRNA ligase 1 from Petrotoga mobilis (strain DSM 10674 / SJ95).